A 440-amino-acid chain; its full sequence is Protein OSB3, chloroplastic/mitochondrial (440 aa).

A chloroplast and mitochondrion-targeting transit peptide spans 1–61 (MNLISRTLTR…AKVSVKPPLN (61 aa)). Positions 80–178 (ISNWINLIGF…VMVQNLNFVQ (99 aa)) constitute an SSB domain. PDF region regions lie at residues 218 to 270 (WKHL…LKLE), 294 to 342 (WKDL…SKLP), and 380 to 428 (WKNL…SKLP).

As to expression, expressed primarily in the female gametophyte and in the floral abscission zone.

Its subcellular location is the mitochondrion. The protein resides in the plastid. It is found in the chloroplast. In terms of biological role, binds single-stranded DNA. The polypeptide is Protein OSB3, chloroplastic/mitochondrial (OSB3) (Arabidopsis thaliana (Mouse-ear cress)).